A 284-amino-acid chain; its full sequence is Pantothenate synthetase (284 aa).

An ATP-binding site is contributed by 30 to 37 (MGNLHDGH). His37 serves as the catalytic Proton donor. Gln61 is a binding site for (R)-pantoate. Gln61 lines the beta-alanine pocket. 149–152 (GEKD) provides a ligand contact to ATP. Residue Gln155 participates in (R)-pantoate binding. Residues Val178 and 186-189 (LSSR) each bind ATP.

Belongs to the pantothenate synthetase family. In terms of assembly, homodimer.

Its subcellular location is the cytoplasm. It catalyses the reaction (R)-pantoate + beta-alanine + ATP = (R)-pantothenate + AMP + diphosphate + H(+). It functions in the pathway cofactor biosynthesis; (R)-pantothenate biosynthesis; (R)-pantothenate from (R)-pantoate and beta-alanine: step 1/1. In terms of biological role, catalyzes the condensation of pantoate with beta-alanine in an ATP-dependent reaction via a pantoyl-adenylate intermediate. The polypeptide is Pantothenate synthetase (Klebsiella pneumoniae subsp. pneumoniae (strain ATCC 700721 / MGH 78578)).